Reading from the N-terminus, the 359-residue chain is MLHTPLFELCREAGGRMVPFAGWEMAVQFEGLMAEHRAVRQRCGVFDISHMGVLTLTGSGVKDKLQGLVPSDLQRIGPGEAQYTVLLNEAGGIRDDLIVYDRSDTEVVVVINAACADSDTAWIKQQLEPQGVSVSDRKAGGVLLALQGPEAVGRLERLCGESLAGVPRFGHRDLTIKGEPVFAARTGYTGEDGFELLLTASAGQSLWRQLLEDGVAPCGLGARDSLRLEAAMHLYGNDMDANTSPLECGLGWLVHLEMPIEFVGREALERQTAEGVSRKLVGLQLQGRAIARHDYPVLHNGEPVGVVTSGTFSPTLEHPVALASVRADLAKLGNELMVEIRGRQEPAVVVKRPFYRRQG.

This sequence belongs to the GcvT family. The glycine cleavage system is composed of four proteins: P, T, L and H.

The enzyme catalyses N(6)-[(R)-S(8)-aminomethyldihydrolipoyl]-L-lysyl-[protein] + (6S)-5,6,7,8-tetrahydrofolate = N(6)-[(R)-dihydrolipoyl]-L-lysyl-[protein] + (6R)-5,10-methylene-5,6,7,8-tetrahydrofolate + NH4(+). Its function is as follows. The glycine cleavage system catalyzes the degradation of glycine. In Synechococcus sp. (strain RCC307), this protein is Aminomethyltransferase.